The chain runs to 485 residues: P2X purinoceptor 2 (485 aa).

Over 1–43 (MAAAQPRLPAGAAMVRRLARGCWSAFWDYETPKVIVVRNRRLG) the chain is Cytoplasmic. Cystine bridges form between C22–C443, C126–C177, C137–C160, C143–C171, C227–C237, and C271–C280. A helical membrane pass occupies residues 44 to 64 (FVHRMVQLLILLYFVWYVFIV). Residues 65–339 (QKSYQDSETG…IVHGQAGKFS (275 aa)) are Extracellular-facing. ATP contacts are provided by K82 and K84. Residue N195 is glycosylated (N-linked (GlcNAc...) asparagine). T197 contributes to the ATP binding site. N252 carries an N-linked (GlcNAc...) asparagine glycan. The ATP site is built by S297, N301, and R303. Residue N311 is glycosylated (N-linked (GlcNAc...) asparagine). An ATP-binding site is contributed by K321. Positions 322–335 (AYGIRIDVIVHGQA) are pore-forming motif. A helical transmembrane segment spans residues 340-360 (LIPTIINLATALTSIGVGSFL). Residues 361-485 (CDWILLTFMN…STDPKGLAQL (125 aa)) lie on the Cytoplasmic side of the membrane. Residues 406 to 485 (PPPSHYSQDQ…STDPKGLAQL (80 aa)) are disordered. Over residues 420–436 (PSGEGPALGEGAELPLA) the composition is skewed to low complexity. Over residues 469 to 478 (PSQQDSTSTD) the composition is skewed to polar residues.

It belongs to the P2X receptor family. In terms of assembly, homotrimer and heterotrimer; functional P2XRs are organized as homomeric and heteromeric trimers. Homotrimer. Forms heterotrimer with P2XR1. Forms heterotrimer with P2XR3. Forms heterotrimer with P2XR6.

The protein localises to the cell membrane. The catalysed reaction is Ca(2+)(in) = Ca(2+)(out). It catalyses the reaction K(+)(in) = K(+)(out). The enzyme catalyses Na(+)(in) = Na(+)(out). With respect to regulation, fast activation by external ATP. Exhibits slow desensitization during prolonged ATP activation. Not sensitive to the ATP agonist:alpha/beta-methylene-ATP. Its function is as follows. ATP-gated nonselective transmembrane cation channel permeable to potassium, sodium and calcium. Activation by extracellular ATP induces a variety of cellular responses, such as excitatory postsynaptic responses in sensory neurons, neuromuscular junctions (NMJ) formation, hearing, perception of taste and peristalsis. In the inner ear, regulates sound transduction and auditory neurotransmission, outer hair cell electromotility, inner ear gap junctions, and K(+) recycling. Mediates synaptic transmission between neurons and from neurons to smooth muscle. This Mus musculus (Mouse) protein is P2X purinoceptor 2 (P2rx2).